Reading from the N-terminus, the 435-residue chain is Histidinol dehydrogenase (435 aa).

Tyrosine 131, glutamine 189, and asparagine 212 together coordinate NAD(+). Substrate is bound by residues serine 238, glutamine 260, and histidine 263. Zn(2+) contacts are provided by glutamine 260 and histidine 263. Catalysis depends on proton acceptor residues glutamate 327 and histidine 328. Substrate is bound by residues histidine 328, aspartate 361, glutamate 415, and histidine 420. Aspartate 361 lines the Zn(2+) pocket. A Zn(2+)-binding site is contributed by histidine 420.

This sequence belongs to the histidinol dehydrogenase family. In terms of assembly, homodimer. It depends on Zn(2+) as a cofactor.

The catalysed reaction is L-histidinol + 2 NAD(+) + H2O = L-histidine + 2 NADH + 3 H(+). It participates in amino-acid biosynthesis; L-histidine biosynthesis; L-histidine from 5-phospho-alpha-D-ribose 1-diphosphate: step 9/9. Catalyzes the sequential NAD-dependent oxidations of L-histidinol to L-histidinaldehyde and then to L-histidine. The chain is Histidinol dehydrogenase from Buchnera aphidicola subsp. Baizongia pistaciae (strain Bp).